Consider the following 123-residue polypeptide: uncharacterized protein (123 aa).

This is an uncharacterized protein from Bacillus subtilis (strain 168).